The sequence spans 129 residues: Natriuretic peptides B (129 aa).

The first 26 residues, 1-26 (MDPQKALSRTLLLLLFLHLSLLGCRS), serve as a signal peptide directing secretion. C107 and C123 form a disulfide bridge.

It belongs to the natriuretic peptide family. The precursor molecule is proteolytically cleaved, possibly by FURIN or CORIN, to produce the active peptide. May undergo further proteolytic cleavage by various proteases such as DPP4, MME and possibly FAP, to give rise to a variety of shorter peptides. May be cleaved at Pro-99 by the prolyl endopeptidase FAP (seprase) activity (in vitro). May be degraded by IDE. During IDE degradation, the resulting products initially increase the activation of NPR1 and can also stimulate NPR2 to produce cGMP before the fragments are completely degraded and inactivated by IDE (in vitro).

It localises to the secreted. Cardiac hormone that plays a key role in mediating cardio-renal homeostasis. May also function as a paracrine antifibrotic factor in the heart. Acts by specifically binding and stimulating NPR1 to produce cGMP, which in turn activates effector proteins that drive various biological responses. Involved in regulating the extracellular fluid volume and maintaining the fluid-electrolyte balance through natriuresis, diuresis, vasorelaxation, and inhibition of renin and aldosterone secretion. Binds the clearance receptor NPR3. The protein is Natriuretic peptides B (NPPB) of Ovis aries (Sheep).